Consider the following 1477-residue polypeptide: Ring canal kelch protein (1477 aa).

3 disordered regions span residues L19 to G62, L76 to G96, and S108 to E137. Over residues S20–N46 the composition is skewed to low complexity. S108 and S111 each carry phosphoserine. The BTB domain occupies C157 to E223. Kelch repeat units lie at residues I404–D449, K450–G496, I498–G543, L545–N592, L594–G639, and L641–K687. Position 690 (U690) is a non-standard amino acid, selenocysteine. 5 disordered regions span residues P744 to I841, H1119 to T1200, R1291 to D1326, P1359 to K1416, and P1446 to D1477. Composition is skewed to low complexity over residues A763–N813 and A820–Q839. Residues I1125–T1137 show a composition bias toward polar residues. The span at K1166–S1192 shows a compositional bias: low complexity. Low complexity-rich tracts occupy residues Q1374–Q1391 and T1456–D1477.

As to expression, both proteins are expressed in ovaries, male testis, ovariectomized females, cuticle, salivary gland and imaginal disks. Kelch short protein is the predominant form and is also expressed in fat bodies. On entry into metamorphosis levels of full-length protein increase in testis and imaginal disks.

It localises to the cytoplasm. It is found in the cytoskeleton. In terms of biological role, component of ring canals that regulates the flow of cytoplasm between cells. May be involved in the regulation of cytoplasm flow from nurse cells to the oocyte during oogenesis. Binds actin. The sequence is that of Ring canal kelch protein (kel) from Drosophila melanogaster (Fruit fly).